The sequence spans 281 residues: Ribulose-5-phosphate-3-epimerase, chloroplastic (281 aa).

A chloroplast-targeting transit peptide spans 1–45 (MSTSAASLCCSSTQVNGFGLRPERSLLYQPTSFSFSRRRTHGIVK). Residue Ser63 coordinates substrate. The a divalent metal cation site is built by His88, Asp90, and His121. Asp90 serves as the catalytic Proton acceptor. Substrate is bound by residues His121, 199 to 202 (GFGG), 232 to 234 (DGG), and 254 to 256 (GSA). Position 232 (Asp232) interacts with a divalent metal cation. Asp232 (proton donor) is an active-site residue.

The protein belongs to the ribulose-phosphate 3-epimerase family. In terms of assembly, homooctamer. The cofactor is Co(2+). Fe(2+) serves as cofactor. It depends on Mn(2+) as a cofactor. Requires Zn(2+) as cofactor. As to expression, present in roots, seeds and flowers. Accumulates in nematode feeding sites (NFS).

The protein localises to the plastid. It is found in the chloroplast thylakoid membrane. The enzyme catalyses D-ribulose 5-phosphate = D-xylulose 5-phosphate. The protein operates within carbohydrate biosynthesis; Calvin cycle. In terms of biological role, essential protein required during embryogenesis. Catalyzes the reversible epimerization of D-ribulose 5-phosphate to D-xylulose 5-phosphate. Essential for the early steps of nematode feeding sites (NFS, multinucleated root cells) formation induced by the root-knot nematodes Heterodera schachtii, Meloidogyne incognita, M.javanica and M.hapla. In Arabidopsis thaliana (Mouse-ear cress), this protein is Ribulose-5-phosphate-3-epimerase, chloroplastic.